The following is a 188-amino-acid chain: Elongation factor P 1 (188 aa).

The protein belongs to the elongation factor P family.

It is found in the cytoplasm. It participates in protein biosynthesis; polypeptide chain elongation. Functionally, involved in peptide bond synthesis. Stimulates efficient translation and peptide-bond synthesis on native or reconstituted 70S ribosomes in vitro. Probably functions indirectly by altering the affinity of the ribosome for aminoacyl-tRNA, thus increasing their reactivity as acceptors for peptidyl transferase. In Mesorhizobium japonicum (strain LMG 29417 / CECT 9101 / MAFF 303099) (Mesorhizobium loti (strain MAFF 303099)), this protein is Elongation factor P 1.